The chain runs to 294 residues: ATP synthase gamma chain (294 aa).

The protein belongs to the ATPase gamma chain family. F-type ATPases have 2 components, CF(1) - the catalytic core - and CF(0) - the membrane proton channel. CF(1) has five subunits: alpha(3), beta(3), gamma(1), delta(1), epsilon(1). CF(0) has three main subunits: a, b and c.

The protein resides in the cell inner membrane. Produces ATP from ADP in the presence of a proton gradient across the membrane. The gamma chain is believed to be important in regulating ATPase activity and the flow of protons through the CF(0) complex. The polypeptide is ATP synthase gamma chain (Campylobacter jejuni subsp. jejuni serotype O:6 (strain 81116 / NCTC 11828)).